We begin with the raw amino-acid sequence, 532 residues long: Protein DETOXIFICATION 51 (532 aa).

12 consecutive transmembrane segments (helical) span residues 65–85 (FPIA…MFFL), 98–118 (LAIA…ALGM), 142–162 (VVFL…VGKI), 176–196 (AQTY…LHPI), 208–228 (PVTL…LFLV), 238–258 (VAVA…CYVW), 290–310 (VSVC…GLLV), 316–336 (VAAM…PSSL), 358–378 (LTAT…AAFA), 395–415 (ILQL…GNCP), 439–459 (AFYL…GIGF), and 461–481 (GLWV…MYVV).

It belongs to the multi antimicrobial extrusion (MATE) (TC 2.A.66.1) family. In terms of tissue distribution, expressed in the meristematic regions. Mainly detected in tissues where cells were actively dividing, such as leaf primordia and young leaves, the junction between lateral root and the primary root, root cap, hydathodes, the junction between secondary inflorescence and the main inflorescence, young stamen and young siliques. Highly expressed at the junction between the hypocotyl and the root, and at the marginal areas of cotyledons and true leaves, coinciding with the locations of the hydathode. Also highly expressed at the basal regions of the newly emerged lateral roots. In the floral organs, mostly expressed at the style of the pistil.

It localises to the endosome membrane. Its subcellular location is the late endosome membrane. Functionally, functions as a multidrug and toxin extrusion transporter that negatively regulates plant disease resistance. Plays an important role in maintaining normal plant architecture, possibly by regulating local auxin biosynthesis. May act as a negative regulator of hypocotyl cell elongation in the light. The sequence is that of Protein DETOXIFICATION 51 from Arabidopsis thaliana (Mouse-ear cress).